The following is a 311-amino-acid chain: tRNA dimethylallyltransferase (311 aa).

An ATP-binding site is contributed by 11–18 (GPTAVGKT). 13–18 (TAVGKT) is a substrate binding site. Positions 36 to 39 (DSVQ) are interaction with substrate tRNA.

This sequence belongs to the IPP transferase family. In terms of assembly, monomer. It depends on Mg(2+) as a cofactor.

The catalysed reaction is adenosine(37) in tRNA + dimethylallyl diphosphate = N(6)-dimethylallyladenosine(37) in tRNA + diphosphate. Its function is as follows. Catalyzes the transfer of a dimethylallyl group onto the adenine at position 37 in tRNAs that read codons beginning with uridine, leading to the formation of N6-(dimethylallyl)adenosine (i(6)A). The sequence is that of tRNA dimethylallyltransferase from Exiguobacterium sp. (strain ATCC BAA-1283 / AT1b).